A 275-amino-acid polypeptide reads, in one-letter code: 2,3,4,5-tetrahydropyridine-2,6-dicarboxylate N-succinyltransferase (275 aa).

Residues R105 and D142 each coordinate substrate.

Belongs to the transferase hexapeptide repeat family. Homotrimer.

Its subcellular location is the cytoplasm. The catalysed reaction is (S)-2,3,4,5-tetrahydrodipicolinate + succinyl-CoA + H2O = (S)-2-succinylamino-6-oxoheptanedioate + CoA. Its pathway is amino-acid biosynthesis; L-lysine biosynthesis via DAP pathway; LL-2,6-diaminopimelate from (S)-tetrahydrodipicolinate (succinylase route): step 1/3. This Pectobacterium atrosepticum (strain SCRI 1043 / ATCC BAA-672) (Erwinia carotovora subsp. atroseptica) protein is 2,3,4,5-tetrahydropyridine-2,6-dicarboxylate N-succinyltransferase.